A 240-amino-acid polypeptide reads, in one-letter code: Pyridoxine 5'-phosphate synthase (240 aa).

Residue N6 participates in 3-amino-2-oxopropyl phosphate binding. 8-9 (DH) contributes to the 1-deoxy-D-xylulose 5-phosphate binding site. Residue R17 participates in 3-amino-2-oxopropyl phosphate binding. Residue H42 is the Proton acceptor of the active site. Positions 44 and 49 each coordinate 1-deoxy-D-xylulose 5-phosphate. The Proton acceptor role is filled by E69. Residue T99 coordinates 1-deoxy-D-xylulose 5-phosphate. H190 acts as the Proton donor in catalysis. 3-amino-2-oxopropyl phosphate-binding positions include G191 and 212 to 213 (GH).

The protein belongs to the PNP synthase family. Homooctamer; tetramer of dimers.

The protein resides in the cytoplasm. It carries out the reaction 3-amino-2-oxopropyl phosphate + 1-deoxy-D-xylulose 5-phosphate = pyridoxine 5'-phosphate + phosphate + 2 H2O + H(+). It functions in the pathway cofactor biosynthesis; pyridoxine 5'-phosphate biosynthesis; pyridoxine 5'-phosphate from D-erythrose 4-phosphate: step 5/5. Its function is as follows. Catalyzes the complicated ring closure reaction between the two acyclic compounds 1-deoxy-D-xylulose-5-phosphate (DXP) and 3-amino-2-oxopropyl phosphate (1-amino-acetone-3-phosphate or AAP) to form pyridoxine 5'-phosphate (PNP) and inorganic phosphate. The polypeptide is Pyridoxine 5'-phosphate synthase (Pseudomonas putida (strain ATCC 700007 / DSM 6899 / JCM 31910 / BCRC 17059 / LMG 24140 / F1)).